Consider the following 513-residue polypeptide: GMP synthase [glutamine-hydrolyzing] (513 aa).

Residues 7–198 (LIVVVDFGGQ…LFNIAGCRGD (192 aa)) enclose the Glutamine amidotransferase type-1 domain. Residue Cys84 is the Nucleophile of the active site. Active-site residues include His172 and Glu174. A GMPS ATP-PPase domain is found at 199-388 (WTTESFITRQ…LGVPEEIVGR (190 aa)). Residue 226–232 (SGGVDSS) participates in ATP binding.

Homodimer.

It catalyses the reaction XMP + L-glutamine + ATP + H2O = GMP + L-glutamate + AMP + diphosphate + 2 H(+). It participates in purine metabolism; GMP biosynthesis; GMP from XMP (L-Gln route): step 1/1. Its function is as follows. Catalyzes the synthesis of GMP from XMP. The chain is GMP synthase [glutamine-hydrolyzing] from Symbiobacterium thermophilum (strain DSM 24528 / JCM 14929 / IAM 14863 / T).